A 199-amino-acid chain; its full sequence is Thymidine kinase (199 aa).

ATP contacts are provided by residues Gly-9 to Thr-16 and Asp-93 to Gln-96. The active-site Proton acceptor is the Glu-94. Residues Cys-151, Cys-154, Cys-188, and His-191 each contribute to the Zn(2+) site.

Belongs to the thymidine kinase family. Homotetramer.

The protein localises to the cytoplasm. The catalysed reaction is thymidine + ATP = dTMP + ADP + H(+). The chain is Thymidine kinase from Lactobacillus acidophilus (strain ATCC 700396 / NCK56 / N2 / NCFM).